The primary structure comprises 291 residues: MGDDAKAKEFLDAADKRLRGGNFFKMFGGGSSRYDDAASDYTKAANLFKMSKKWDQAGAAFQKAAECFLKGSSKHDAASSYVLAAGCYKKGNVIDAITCLKAAIEYYTDEGRFAISAKHQKEIAELYEAEGDFDQAIASYQIASDYFDGENSTVSSHQCLLKIALFSAQLERYEKSIEIYEQVAAASLDNNLTQWGCKEYFLRACLCYLAADDVVGAERALQRYKDMQASFNSTRECRLLDGIIQACRNNNVEDFTNEVAEFNSISPLDSWKTSILLRIKNTINRETESVV.

TPR repeat units lie at residues 14-51 (ADKR…FKMS), 77-110 (AASS…YTDE), 117-150 (AKHQ…FDGE), and 157-190 (HQCL…SLDN).

It belongs to the SNAP family. Interacts with nsfA and probably SNARE proteins.

Its subcellular location is the cytoplasmic vesicle membrane. In terms of biological role, may be required for vesicular transport between the endoplasmic reticulum and the Golgi apparatus. Involved in vesicle fusion with nsfA and probably SNARE proteins. In Dictyostelium discoideum (Social amoeba), this protein is Alpha-soluble NSF attachment protein (snpA).